A 478-amino-acid polypeptide reads, in one-letter code: Sugar transporter ERD6-like 18 (478 aa).

Helical transmembrane passes span 31-51 (ITACVILSTFIAVCGSFSFGV), 71-91 (IAQFSAFASLSTLGAAIGALF), 110-130 (LLCIIGWFSIAFAKDVMWLNF), 133-153 (ISSGIGLGLISYVVPVYIAEI), 162-180 (FTFTNQLLQNSGLAMVYFS), 188-208 (ILALLGALPCFIQVIGLFFVP), 270-290 (TLVVGIGLMLIQQFSGSSAVL), 306-326 (IGSTLLGLFMIPKAMIGVILV), 333-353 (PLLLTSVSGMCITSMLIGVAF), 367-387 (VFTFICVTLYIGTYAIGLGGL), 407-427 (IVTLVSWSSSSIVTYAFNFLL), and 433-453 (GTFYVFGAVGGLALLFIWLLV).

Belongs to the major facilitator superfamily. Sugar transporter (TC 2.A.1.1) family. In terms of tissue distribution, expressed in leaf vasculature, stem and flowers.

It is found in the membrane. In terms of biological role, sugar transporter. In Arabidopsis thaliana (Mouse-ear cress), this protein is Sugar transporter ERD6-like 18 (SFP2).